The sequence spans 130 residues: Small ribosomal subunit protein uS8 (130 aa).

This sequence belongs to the universal ribosomal protein uS8 family. In terms of assembly, part of the 30S ribosomal subunit. Contacts proteins S5 and S12.

Its function is as follows. One of the primary rRNA binding proteins, it binds directly to 16S rRNA central domain where it helps coordinate assembly of the platform of the 30S subunit. This Pseudomonas entomophila (strain L48) protein is Small ribosomal subunit protein uS8.